The following is a 443-amino-acid chain: Chromosomal replication initiator protein DnaA (443 aa).

The domain I, interacts with DnaA modulators stretch occupies residues 1 to 80 (MFLEEKLNLV…ETCGDKIPVE (80 aa)). A domain II region spans residues 80–104 (EILIETKAASPLQSILEKSFDQKDF). The interval 105-321 (QFNPDYTFET…GALNDIYLYK (217 aa)) is domain III, AAA+ region. Residues glycine 148, glycine 150, lysine 151, and threonine 152 each contribute to the ATP site. Positions 322-443 (KSYSLLFLNL…ERISSKYKLQ (122 aa)) are domain IV, binds dsDNA.

It belongs to the DnaA family. In terms of assembly, oligomerizes as a right-handed, spiral filament on DNA at oriC.

It localises to the cytoplasm. Functionally, plays an essential role in the initiation and regulation of chromosomal replication. ATP-DnaA binds to the origin of replication (oriC) to initiate formation of the DNA replication initiation complex once per cell cycle. Binds the DnaA box (a 9 base pair repeat at the origin) and separates the double-stranded (ds)DNA. Forms a right-handed helical filament on oriC DNA; dsDNA binds to the exterior of the filament while single-stranded (ss)DNA is stabiized in the filament's interior. The ATP-DnaA-oriC complex binds and stabilizes one strand of the AT-rich DNA unwinding element (DUE), permitting loading of DNA polymerase. After initiation quickly degrades to an ADP-DnaA complex that is not apt for DNA replication. Binds acidic phospholipids. The protein is Chromosomal replication initiator protein DnaA of Leptospira interrogans serogroup Icterohaemorrhagiae serovar copenhageni (strain Fiocruz L1-130).